The sequence spans 154 residues: Aspartate carbamoyltransferase regulatory chain (154 aa).

Cys-109, Cys-114, Cys-138, and Cys-141 together coordinate Zn(2+).

It belongs to the PyrI family. Contains catalytic and regulatory chains. It depends on Zn(2+) as a cofactor.

Functionally, involved in allosteric regulation of aspartate carbamoyltransferase. The protein is Aspartate carbamoyltransferase regulatory chain of Yersinia pseudotuberculosis serotype O:1b (strain IP 31758).